Reading from the N-terminus, the 681-residue chain is Macrolide export ATP-binding/permease protein MacB (681 aa).

One can recognise an ABC transporter domain in the interval 6–244 (LKLAAVTRRF…FAEVGVGAAA (239 aa)). 42-49 (GASGSGKS) contacts ATP. Over residues 246–273 (TETAADTRSAPASGDAPPPANNDTAADP) the composition is skewed to low complexity. A disordered region spans residues 246 to 298 (TETAADTRSAPASGDAPPPANNDTAADPAPAPDASPPAPAVSPKHAGWRGSRS). Pro residues predominate over residues 274–285 (APAPDASPPAPA). Helical transmembrane passes span 306–326 (CLTM…VAVG), 554–574 (LTLL…IGVM), 611–631 (LVCL…GALF), and 644–664 (AGAI…FGFM).

The protein belongs to the ABC transporter superfamily. Macrolide exporter (TC 3.A.1.122) family. Homodimer.

The protein resides in the cell inner membrane. In terms of biological role, non-canonical ABC transporter that contains transmembrane domains (TMD), which form a pore in the inner membrane, and an ATP-binding domain (NBD), which is responsible for energy generation. Confers resistance against macrolides. In Burkholderia orbicola (strain AU 1054), this protein is Macrolide export ATP-binding/permease protein MacB.